Here is a 98-residue protein sequence, read N- to C-terminus: Co-chaperonin GroES (98 aa).

This sequence belongs to the GroES chaperonin family. Heptamer of 7 subunits arranged in a ring. Interacts with the chaperonin GroEL.

It localises to the cytoplasm. Together with the chaperonin GroEL, plays an essential role in assisting protein folding. The GroEL-GroES system forms a nano-cage that allows encapsulation of the non-native substrate proteins and provides a physical environment optimized to promote and accelerate protein folding. GroES binds to the apical surface of the GroEL ring, thereby capping the opening of the GroEL channel. In Agrobacterium fabrum (strain C58 / ATCC 33970) (Agrobacterium tumefaciens (strain C58)), this protein is Co-chaperonin GroES.